Reading from the N-terminus, the 95-residue chain is MAKLTKEEVKHVANLARLAITEEEAEKFAEQLGKITDFAEQLNELDTANVEPTTHVLPLVNVMREDVAVKGLDREVMMLNVREQEDGQVKVPAIM.

It belongs to the GatC family. Heterotrimer of A, B and C subunits.

It carries out the reaction L-glutamyl-tRNA(Gln) + L-glutamine + ATP + H2O = L-glutaminyl-tRNA(Gln) + L-glutamate + ADP + phosphate + H(+). The enzyme catalyses L-aspartyl-tRNA(Asn) + L-glutamine + ATP + H2O = L-asparaginyl-tRNA(Asn) + L-glutamate + ADP + phosphate + 2 H(+). Functionally, allows the formation of correctly charged Asn-tRNA(Asn) or Gln-tRNA(Gln) through the transamidation of misacylated Asp-tRNA(Asn) or Glu-tRNA(Gln) in organisms which lack either or both of asparaginyl-tRNA or glutaminyl-tRNA synthetases. The reaction takes place in the presence of glutamine and ATP through an activated phospho-Asp-tRNA(Asn) or phospho-Glu-tRNA(Gln). In Lysinibacillus sphaericus (strain C3-41), this protein is Aspartyl/glutamyl-tRNA(Asn/Gln) amidotransferase subunit C.